Consider the following 347-residue polypeptide: Protein RecA (347 aa).

Residue 67–74 (GPESSGKT) coordinates ATP.

The protein belongs to the RecA family. In terms of processing, the protein migrates as a 40 kDa protein in strains 69A and NCTC 11637. When overexpressed in E.coli a 38 kDa protein is made which is unable to complement the E.coli deletion mutant. It has been suggested this size difference is due to a post-translational modification.

The protein localises to the cytoplasm. Its function is as follows. Can catalyze the hydrolysis of ATP in the presence of single-stranded DNA, the ATP-dependent uptake of single-stranded DNA by duplex DNA, and the ATP-dependent hybridization of homologous single-stranded DNAs. It interacts with LexA causing its activation and leading to its autocatalytic cleavage. In terms of biological role, deletion of this gene leads to the inability of the bacteria to perform homologous recombination, and markedly increases UV sensitivity. This chain is Protein RecA, found in Helicobacter pylori (strain ATCC 700392 / 26695) (Campylobacter pylori).